Consider the following 93-residue polypeptide: MARSLKKNPFVANHLLKKIDKLNRKAEKEIIRTWSRGSTIIPTMIGHTIAIHNGKEHLPIYITDHMVGHKLGEFASTFNFRGHTKSDNKSRRR.

This sequence belongs to the universal ribosomal protein uS19 family.

It is found in the plastid. The protein resides in the chloroplast. Protein S19 forms a complex with S13 that binds strongly to the 16S ribosomal RNA. The polypeptide is Small ribosomal subunit protein uS19c (Ipomoea purpurea (Common morning glory)).